We begin with the raw amino-acid sequence, 232 residues long: Fibrillarin-like rRNA/tRNA 2'-O-methyltransferase (232 aa).

Residues 89 to 90, 108 to 109, 133 to 134, and 153 to 156 each bind S-adenosyl-L-methionine; these read TT, EF, DA, and DIAQ.

It belongs to the methyltransferase superfamily. Fibrillarin family. As to quaternary structure, interacts with nop5. Component of box C/D small ribonucleoprotein (sRNP) particles that contain rpl7ae, FlpA and nop5, plus a guide RNA. These sRNP particles form homodimers, giving rise to an asymmetric holoenzyme.

Functionally, involved in pre-rRNA and tRNA processing. Utilizes the methyl donor S-adenosyl-L-methionine to catalyze the site-specific 2'-hydroxyl methylation of ribose moieties in rRNA and tRNA. Site specificity is provided by a guide RNA that base pairs with the substrate. Methylation occurs at a characteristic distance from the sequence involved in base pairing with the guide RNA. The chain is Fibrillarin-like rRNA/tRNA 2'-O-methyltransferase from Saccharolobus solfataricus (strain ATCC 35092 / DSM 1617 / JCM 11322 / P2) (Sulfolobus solfataricus).